The primary structure comprises 250 residues: MGQKSNPNGLRLGIIRTWESKWYDVDKKVPFLVGEDFKIRTLIKNHYPKSTISQIEIKRLKKSNDEFIEIDLYTSKIGIIQGPENKNKNSLINKIEKLINKKVQINIFEVKAINKIAVLVAQNIAMQLQQRAFYKAVLKSAIQKALKSGIKGIKIIITGRLGGAEKARRDSISMGVVPLNTLRADIDYAFEEAHTTYGVLGVKVIINHGEVLPNKTIADTRQIFSSQYENKKNNNKRHFVDKKNFKKSTS.

In terms of domain architecture, KH type-2 spans 39-111 (IRTLIKNHYP…KVQINIFEVK (73 aa)).

It belongs to the universal ribosomal protein uS3 family. Part of the 30S ribosomal subunit. Forms a tight complex with proteins S10 and S14.

In terms of biological role, binds the lower part of the 30S subunit head. Binds mRNA in the 70S ribosome, positioning it for translation. The chain is Small ribosomal subunit protein uS3 from Phytoplasma vitis (Flavescence doree phytoplasma).